A 546-amino-acid polypeptide reads, in one-letter code: Carboxypeptidase Y homolog A (546 aa).

An N-terminal signal peptide occupies residues 1-17 (MKLLASTVLVGAAAASI). Residues 18-132 (TPQQQVLQNP…KLEQYNLRAK (115 aa)) constitute a propeptide that is removed on maturation. Intrachain disulfides connect C186/C426, C320/C334, C344/C367, C351/C360, and C389/C396. Residue N217 is glycosylated (N-linked (GlcNAc...) asparagine). The active site involves S273. D465 is an active-site residue. N512 carries an N-linked (GlcNAc...) asparagine glycan. H523 is an active-site residue.

It belongs to the peptidase S10 family.

Its subcellular location is the vacuole. The enzyme catalyses Release of a C-terminal amino acid with broad specificity.. Functionally, vacuolar carboxypeptidase involved in degradation of small peptides. Digests preferentially peptides containing an aliphatic or hydrophobic residue in P1' position, as well as methionine, leucine or phenylalanine in P1 position of ester substrate. The sequence is that of Carboxypeptidase Y homolog A (CPYA) from Botryotinia fuckeliana (strain B05.10) (Noble rot fungus).